A 152-amino-acid chain; its full sequence is MDSGTEEYELNGGLPPGTPGSPDASPARWGWRHGPINVNHYASKKSAAESMLDIALLMANASQLKAVVEQGPSFAFYVPLVVLISISLVLQIGVGVLLIFLVKYDLNNPAKHAKLDFLNNLATGLVFIIVVVNIFITAFGVQKPLMDMAPQQ.

Met-1 carries the post-translational modification N-acetylmethionine. Residues 1–26 are disordered; the sequence is MDSGTEEYELNGGLPPGTPGSPDASP. Over 1-78 the chain is Extracellular; sequence MDSGTEEYEL…EQGPSFAFYV (78 aa). 2 positions are modified to phosphoserine: Ser-21 and Ser-25. Residues 26 to 37 form an N-terminal adhesion motif region; it reads PARWGWRHGPIN. The required to induce plasma membrane rupture stretch occupies residues 40–69; the sequence is HYASKKSAAESMLDIALLMANASQLKAVVE. The helix alpha1 stretch occupies residues 44 to 55; that stretch reads KKSAAESMLDIA. The tract at residues 58-74 is helix alpha2; sequence MANASQLKAVVEQGPSF. N-linked (GlcNAc...) asparagine glycosylation occurs at Asn-60. A helical transmembrane segment spans residues 79–103; it reads PLVVLISISLVLQIGVGVLLIFLVK. Residues 104–113 are Cytoplasmic-facing; that stretch reads YDLNNPAKHA. Residues 114-138 traverse the membrane as a helical segment; that stretch reads KLDFLNNLATGLVFIIVVVNIFITA. Residues 139–152 are Extracellular-facing; it reads FGVQKPLMDMAPQQ.

The protein belongs to the ninjurin family. Homodimer; in absence of death stimuli, forms an inactive homodimer. Homooligomer; in response to death stimuli, homooligomerizes into long, highly branched filaments and large, ring-shaped structures in the membrane. In terms of processing, cleaved by MMP9 protease to generate the Secreted ninjurin-1 form. N-linked glycosylation is required for homooligomerization. Widely expressed in both adult and embryonic tissues, primarily those of epithelial origin.

The protein resides in the cell membrane. Its subcellular location is the synaptic cell membrane. It is found in the secreted. In response to death stimuli, homooligomerizes and disrupts membrane integrity by introducing the hydrophilic faces of alpha1 and alpha2 helices into the hydrophobic membrane. Homooligomerization and ability to mediate plasma membrane rupture is inhibited by glycine; it is unclear whether glycine directly or indirectly inhibits homooligomerization. In normal conditions, NINJ1 is autoinhibited via formation of a homodimer: in the inactive homodimer, the alpha1 and alpha2 helices (residues 44-74) form a single transmembrane region without a kink, in which hydrophilic faces of alpha1 and alpha2 helices are sequestered. Its function is as follows. Effector of various programmed cell death, such as pyroptosis and necroptosis, which mediates plasma membrane rupture (cytolysis). Oligomerizes in response to death stimuli and forms ring-like structures on the plasma membrane: acts by cutting and shedding membrane disks, like a cookie cutter, leading to membrane damage and loss that cannot be repaired by the cell. Plasma membrane rupture leads to release intracellular molecules named damage-associated molecular patterns (DAMPs) that propagate the inflammatory response. Mechanistically, mediates plasma membrane rupture by introducing hydrophilic faces of 2 alpha helices into the hydrophobic membrane. Induces plasma membrane rupture downstream of Gasdermin (GSDMA, GSDMB, GSDMC, GSDMD, or GSDME) or MLKL during pyroptosis or necroptosis, respectively. Acts as an effector of PANoptosis downstream of CASP1, CASP4, CASP8 and RIPK3. Also induces plasma membrane rupture in response to cell swelling caused by osmotic stress and ferroptosis downstream of lipid peroxidation. Acts as a regulator of Toll-like receptor 4 (TLR4) signaling triggered by lipopolysaccharide (LPS) during systemic inflammation; directly binds LPS. Involved in leukocyte migration during inflammation by promoting transendothelial migration of macrophages via homotypic binding. Promotes the migration of monocytes across the brain endothelium to central nervous system inflammatory lesions. Also acts as a homophilic transmembrane adhesion molecule involved in various processes such as axonal growth, cell chemotaxis and angiogenesis. Promotes cell adhesion by mediating homophilic interactions via its extracellular N-terminal adhesion motif (N-NAM). Involved in the progression of the inflammatory stress by promoting cell-to-cell interactions between immune cells and endothelial cells. Plays a role in nerve regeneration by promoting maturation of Schwann cells. Acts as a regulator of angiogenesis. Promotes the formation of new vessels by mediating the interaction between capillary pericyte cells and endothelial cells. Promotes osteoclasts development by enhancing the survival of prefusion osteoclasts. Also involved in striated muscle growth and differentiation. Functionally, secreted form generated by cleavage, which has chemotactic activity. Acts as an anti-inflammatory mediator by promoting monocyte recruitment, thereby ameliorating atherosclerosis. This Homo sapiens (Human) protein is Ninjurin-1.